Consider the following 392-residue polypeptide: Probable protein phosphatase 2C 78 (392 aa).

A PPM-type phosphatase domain is found at 39 to 342; the sequence is ASGEYSIAVA…DDITVVVVYL (304 aa). Residues D73, G74, D274, and D333 each contribute to the Mn(2+) site.

The protein belongs to the PP2C family. Requires Mg(2+) as cofactor. Mn(2+) serves as cofactor.

The enzyme catalyses O-phospho-L-seryl-[protein] + H2O = L-seryl-[protein] + phosphate. The catalysed reaction is O-phospho-L-threonyl-[protein] + H2O = L-threonyl-[protein] + phosphate. The chain is Probable protein phosphatase 2C 78 from Oryza sativa subsp. japonica (Rice).